A 41-amino-acid polypeptide reads, in one-letter code: Large ribosomal subunit protein bL36 (41 aa).

This sequence belongs to the bacterial ribosomal protein bL36 family.

This is Large ribosomal subunit protein bL36 from Chelativorans sp. (strain BNC1).